The sequence spans 131 residues: Methylglyoxal synthase (131 aa).

Residues 1–131 enclose the MGS-like domain; that stretch reads MKIALIAHDK…GDLDYRKLRK (131 aa). Substrate-binding positions include His-8, Lys-12, 34 to 37, and 54 to 55; these read TGTT and SG. Residue Asp-60 is the Proton donor/acceptor of the active site. Position 87 (His-87) interacts with substrate.

It belongs to the methylglyoxal synthase family.

The catalysed reaction is dihydroxyacetone phosphate = methylglyoxal + phosphate. Its function is as follows. Catalyzes the formation of methylglyoxal from dihydroxyacetone phosphate. The protein is Methylglyoxal synthase of Bacillus cereus (strain ATCC 14579 / DSM 31 / CCUG 7414 / JCM 2152 / NBRC 15305 / NCIMB 9373 / NCTC 2599 / NRRL B-3711).